The sequence spans 258 residues: tRNA pseudouridine synthase A (258 aa).

D52 (nucleophile) is an active-site residue. Y111 serves as a coordination point for substrate.

This sequence belongs to the tRNA pseudouridine synthase TruA family. As to quaternary structure, homodimer.

The enzyme catalyses uridine(38/39/40) in tRNA = pseudouridine(38/39/40) in tRNA. In terms of biological role, formation of pseudouridine at positions 38, 39 and 40 in the anticodon stem and loop of transfer RNAs. In Azorhizobium caulinodans (strain ATCC 43989 / DSM 5975 / JCM 20966 / LMG 6465 / NBRC 14845 / NCIMB 13405 / ORS 571), this protein is tRNA pseudouridine synthase A.